We begin with the raw amino-acid sequence, 463 residues long: uncharacterized protein (463 aa).

The next 11 membrane-spanning stretches (helical) occupy residues 6–26 (ILPV…FMLL), 31–51 (TFIS…SLSA), 60–80 (FIYA…IVSM), 101–123 (VRGP…LFFW), 130–152 (LIGA…AAMA), 189–209 (ASIP…FIMI), 242–262 (SILA…MLLF), 269–289 (ATAL…FFVY), 304–324 (GFKF…FFYL), 413–433 (AIWV…AAIC), and 443–463 (KNFI…VMML).

The protein resides in the cell membrane. This is an uncharacterized protein from Bacillus subtilis (strain 168).